Reading from the N-terminus, the 522-residue chain is MSFSRSAADAADTLPDLAATLGAPAERAFVTLGDAFHTRLPAAPLAAPYVVGFSDDVAQLLDLPPSIAAQPGFAELFAGNPTRDWPAHAMPYASVYSGHQFGVWAGQLGDGRALTIGELPGTDGRRYELQLKGGGRTPYSRMGDGRAVLRSSIREFLCSEAMHHLGIPTTRALTVIGSDQPVVREEIETAAVVTRVSESFVRFGHFEHFFSNDRPDLLRQLADHVIDRFYPACRDADDPYLALLEAATLRTADLVAQWQAVGFCHGVMNTDNMSILGVTIDYGPFGFVDAFDANHICNHSDTSGRYAYRMQPRIAHWNCYCLAQALLPLIGLQHGIADDDARAERAVDDAQAVLAKFPERFGPALERAMRAKLGLELEREGDAELANKLLETMHASHADFTLTFRRLAQISKHDASRDAPVRDLFIDREAFDAWANLYRARLSEETRDDAARAVAMNRANPKYVLRNHLAEVAIRRAKEKDFSEVERLAQILRRPFDEQPEHEAYAALPPDWAGSLEVSCSS.

8 residues coordinate ATP: G109, G111, R112, K132, D144, G145, R195, and R202. D271 functions as the Proton acceptor in the catalytic mechanism. The Mg(2+) site is built by N272 and D281. D281 serves as a coordination point for ATP.

It belongs to the SELO family. Requires Mg(2+) as cofactor. Mn(2+) serves as cofactor.

It catalyses the reaction L-seryl-[protein] + ATP = 3-O-(5'-adenylyl)-L-seryl-[protein] + diphosphate. The catalysed reaction is L-threonyl-[protein] + ATP = 3-O-(5'-adenylyl)-L-threonyl-[protein] + diphosphate. It carries out the reaction L-tyrosyl-[protein] + ATP = O-(5'-adenylyl)-L-tyrosyl-[protein] + diphosphate. The enzyme catalyses L-histidyl-[protein] + UTP = N(tele)-(5'-uridylyl)-L-histidyl-[protein] + diphosphate. It catalyses the reaction L-seryl-[protein] + UTP = O-(5'-uridylyl)-L-seryl-[protein] + diphosphate. The catalysed reaction is L-tyrosyl-[protein] + UTP = O-(5'-uridylyl)-L-tyrosyl-[protein] + diphosphate. In terms of biological role, nucleotidyltransferase involved in the post-translational modification of proteins. It can catalyze the addition of adenosine monophosphate (AMP) or uridine monophosphate (UMP) to a protein, resulting in modifications known as AMPylation and UMPylation. The chain is Protein nucleotidyltransferase YdiU from Burkholderia cenocepacia (strain HI2424).